The following is a 562-amino-acid chain: MVTGATSLSLVRDELFATMEQAEQGLEQFIAERQNGSLLQHAVECLQQIRGTLNLIELAGAELLAQEALQLATDIPTGVSEERDGQLAALGNALYVLRRYLENVEANRQEIPELLLPAINEVRCAAGQPALPESFFFSARLDIPRPPSTAIDHLPSEAELGEESRRMRHMYQIGLLGLIREQNLYPSLKLMGRALARLDSLHGGVARSRLCWIGAAAIESIVDGQLLPRKSRKQLFSRIDRELKQLLIGPAYEAPRHLLKELLYLVALSDGQGPRSREVRELHGLAPLPFTDHLLEEESQRLSGPGQSVMRSLSTAIREELAGVKDMLDLIERGVAQPDSLTNLHAQLGKLSKTLGMVGLNSAGTALQTQLPTVAAWAASGVADSPPALLRLADAVLYVESMVGNLERGERRIIRPTPAEPGQEADAFAVHQLAEARIVVIEEAKAGLALAKRAITAYLESNGDKLNLANVPASLQAVRGGLWFLGQERAALLVGGCADYIQQRMIETAQMPSEQMLETLADALTSLEYYLEGGAVLRPQGQPDVLDLASASVKALGLPVAA.

Interacts with PilG and FimV.

It localises to the cytoplasm. In terms of biological role, regulates multiple virulence functions including type IV pilus (T4P)-mediated assembly and twitching motility as well as cAMP-dependent virulence gene expression. Regulates intracellular cyclic AMP (cAMP) levels through the activation of adenylate cyclase CyaB. Also functions as a scaffold linking FimV and PilG at the pole, where type IV pilus (T4P), the Chp chemosensory system and the CyaB adenylate cyclase interact. The protein is Scaffold protein FimL (fimL) of Pseudomonas aeruginosa (strain ATCC 15692 / DSM 22644 / CIP 104116 / JCM 14847 / LMG 12228 / 1C / PRS 101 / PAO1).